Reading from the N-terminus, the 159-residue chain is Protransforming growth factor alpha (159 aa).

The signal sequence occupies residues 1-23; the sequence is MVPATGQLALLALGILLAVCQAL. Positions 24–38 are cleaved as a propeptide — removed in mature form; the sequence is ENSTSPLSDSPVAAA. The Extracellular portion of the chain corresponds to 24-97; it reads ENSTSPLSDS…AVVAASQKKQ (74 aa). N25 is a glycosylation site (N-linked (GlcNAc...) asparagine). The region spanning 44–83 is the EGF-like domain; the sequence is NKCPDSHTQYCFHGTCRFLVQEEKPACVCHSGYVGVRCEH. 3 cysteine pairs are disulfide-bonded: C46/C59, C54/C70, and C72/C81. Residues 89–159 constitute a propeptide, removed in mature form; the sequence is VVAASQKKQA…TACCHSETVV (71 aa). The helical transmembrane segment at 98–123 threads the bilayer; the sequence is AITALVVVSIVALAVLIITCVLIHCC. Topologically, residues 124–159 are cytoplasmic; that stretch reads QLRKHCEWCRALVCRHEKPSALLKGRTACCHSETVV. S-palmitoyl cysteine attachment occurs at residues C152 and C153.

As to quaternary structure, interacts with the PDZ domains of SDCBP and SNTA1. The interaction with SDCBP, is required for the targeting to the cell surface. In the endoplasmic reticulum, in its immature form (i.e. with a prosegment and lacking full N-glycosylation), interacts with CNIH. In the Golgi apparatus, may form a complex with CNIH and GORASP2. Interacts (via cytoplasmic C-terminal domain) with NKD2. Interacts with MAGI3.

It localises to the secreted. Its subcellular location is the extracellular space. The protein resides in the cell membrane. In terms of biological role, TGF alpha is a mitogenic polypeptide that is able to bind to the EGF receptor/EGFR and to act synergistically with TGF beta to promote anchorage-independent cell proliferation in soft agar. This is Protransforming growth factor alpha (Tgfa) from Mus musculus (Mouse).